Here is a 269-residue protein sequence, read N- to C-terminus: Ubiquinone/menaquinone biosynthesis C-methyltransferase UbiE (269 aa).

S-adenosyl-L-methionine contacts are provided by residues T92, D113, and 141–142 (NA).

This sequence belongs to the class I-like SAM-binding methyltransferase superfamily. MenG/UbiE family.

The enzyme catalyses a 2-demethylmenaquinol + S-adenosyl-L-methionine = a menaquinol + S-adenosyl-L-homocysteine + H(+). The catalysed reaction is a 2-methoxy-6-(all-trans-polyprenyl)benzene-1,4-diol + S-adenosyl-L-methionine = a 5-methoxy-2-methyl-3-(all-trans-polyprenyl)benzene-1,4-diol + S-adenosyl-L-homocysteine + H(+). It participates in quinol/quinone metabolism; menaquinone biosynthesis; menaquinol from 1,4-dihydroxy-2-naphthoate: step 2/2. Its pathway is cofactor biosynthesis; ubiquinone biosynthesis. Functionally, methyltransferase required for the conversion of demethylmenaquinol (DMKH2) to menaquinol (MKH2) and the conversion of 2-polyprenyl-6-methoxy-1,4-benzoquinol (DDMQH2) to 2-polyprenyl-3-methyl-6-methoxy-1,4-benzoquinol (DMQH2). The polypeptide is Ubiquinone/menaquinone biosynthesis C-methyltransferase UbiE (Brucella suis biovar 1 (strain 1330)).